Reading from the N-terminus, the 952-residue chain is DNA topoisomerase 1 (952 aa).

A Toprim domain is found at 12–135 (RRLVIVESPA…VKRMVFHEIT (124 aa)). Positions 18 and 104 each coordinate Mg(2+). A Topo IA-type catalytic domain is found at 150–602 (NQKLVDAQET…RFYFGEGDGT (453 aa)). The interaction with DNA stretch occupies residues 184 to 189 (SAGRVQ). Residue Tyr334 is the O-(5'-phospho-DNA)-tyrosine intermediate of the active site. The interval 847–952 (RFGPYVTDGE…KATASKTSED (106 aa)) is disordered. A compositionally biased stretch (basic and acidic residues) spans 871–884 (TPERGYELLAEKRA). The segment covering 885–906 (KGPAKKTAKKAVKKTAAKKAPA) has biased composition (basic residues). 2 stretches are compositionally biased toward low complexity: residues 907–930 (KKAA…AAKS) and 937–952 (AKTA…TSED).

Belongs to the type IA topoisomerase family. Monomer. Mg(2+) is required as a cofactor.

It catalyses the reaction ATP-independent breakage of single-stranded DNA, followed by passage and rejoining.. Its function is as follows. Releases the supercoiling and torsional tension of DNA, which is introduced during the DNA replication and transcription, by transiently cleaving and rejoining one strand of the DNA duplex. Introduces a single-strand break via transesterification at a target site in duplex DNA. The scissile phosphodiester is attacked by the catalytic tyrosine of the enzyme, resulting in the formation of a DNA-(5'-phosphotyrosyl)-enzyme intermediate and the expulsion of a 3'-OH DNA strand. The free DNA strand then undergoes passage around the unbroken strand, thus removing DNA supercoils. Finally, in the religation step, the DNA 3'-OH attacks the covalent intermediate to expel the active-site tyrosine and restore the DNA phosphodiester backbone. Functionally, relaxes supercoiled plasmid in vitro; in the presence of sIHF (integration host factor) relaxation is decreased. This Streptomyces coelicolor (strain ATCC BAA-471 / A3(2) / M145) protein is DNA topoisomerase 1.